Reading from the N-terminus, the 197-residue chain is MSNEHIVWHDSSITKNEYQQKNNHKSGIIWLTGLSGSGKSTIANAAARELFEQGYQVTVLDGDNVRHGLNKDLGFSDDDRKENIRRIGEVAKLFVEQGTIVITAFISPFQEDRRIVRQLVEAGEFHEVFVKCDLNVCEERDPKGLYKKARNGEIPFFTGIDSPYEEPAAPELVLDTGELSREESKQRLVDYVKEKAK.

33 to 40 (GLSGSGKS) contributes to the ATP binding site. Serine 107 acts as the Phosphoserine intermediate in catalysis.

The protein belongs to the APS kinase family.

It catalyses the reaction adenosine 5'-phosphosulfate + ATP = 3'-phosphoadenylyl sulfate + ADP + H(+). Its pathway is sulfur metabolism; hydrogen sulfide biosynthesis; sulfite from sulfate: step 2/3. Functionally, catalyzes the synthesis of activated sulfate. The protein is Adenylyl-sulfate kinase of Bacillus pumilus (strain SAFR-032).